A 303-amino-acid chain; its full sequence is Protein UL24 homolog (303 aa).

Basic and acidic residues predominate over residues 235-249; the sequence is KFRDRTNKKSNDQLR. Positions 235–280 are disordered; the sequence is KFRDRTNKKSNDQLRARQANARPCKKKQHNNKRLRNNRKHGGKVSR. Over residues 257-277 the composition is skewed to basic residues; the sequence is PCKKKQHNNKRLRNNRKHGGK.

The protein belongs to the herpesviridae UL24 family.

The protein localises to the virion. Its subcellular location is the host cytoplasm. The protein resides in the host nucleus. It localises to the host nucleolus. It is found in the host Golgi apparatus. May participate in nuclear egress of viral particles. Plays a role in the dispersal of several host nucleolar proteins including NCL/nucleolin and NPM1. Since deletion of host NCL/nucleolin negatively impact on nuclear egress, UL24 supposedly acts on this process through its effect on host nucleoli. The sequence is that of Protein UL24 homolog (20) from Saimiri sciureus (Common squirrel monkey).